A 264-amino-acid polypeptide reads, in one-letter code: Merozoite surface protein 2 (264 aa).

The N-terminal stretch at Met1–Ile20 is a signal peptide. N-linked (GlcNAc...) asparagine glycans are attached at residues Asn22 and Asn36. Positions Ala44–Ala190 are polymorphic region. The tract at residues Glu46–Asn225 is disordered. 2 repeat units span residues Ala60–Ala91 and Ala92–Ala123. Residues Ala60 to Ala123 are 2 X 32 AA perfects repeats. Low complexity predominate over residues Ser70–Asn81. Residues Gly82–Arg101 are compositionally biased toward polar residues. The segment covering Ser102 to Ser145 has biased composition (low complexity). Asn152 carries N-linked (GlcNAc...) asparagine glycosylation. Positions Thr154–Glu166 are enriched in basic and acidic residues. Residues Asn168 and Asn213 are each glycosylated (N-linked (GlcNAc...) asparagine). A disulfide bridge connects residues Cys221 and Cys229. 2 N-linked (GlcNAc...) asparagine glycosylation sites follow: Asn237 and Asn238. The GPI-anchor amidated asparagine moiety is linked to residue Asn238. The propeptide at Ser239–Ile264 is removed in mature form.

It is found in the cell membrane. May play a role in the merozoite attachment to the erythrocyte. The polypeptide is Merozoite surface protein 2 (Plasmodium falciparum (isolate fid3 / India)).